A 390-amino-acid chain; its full sequence is Chorismate synthase 2 (390 aa).

Arg39 and Arg45 together coordinate NADP(+). FMN contacts are provided by residues 132–134, 253–254, Gly298, 313–317, and Arg339; these read RSS, NA, and KPIPT.

Belongs to the chorismate synthase family. Homotetramer. FMNH2 is required as a cofactor.

It carries out the reaction 5-O-(1-carboxyvinyl)-3-phosphoshikimate = chorismate + phosphate. It participates in metabolic intermediate biosynthesis; chorismate biosynthesis; chorismate from D-erythrose 4-phosphate and phosphoenolpyruvate: step 7/7. In terms of biological role, catalyzes the anti-1,4-elimination of the C-3 phosphate and the C-6 proR hydrogen from 5-enolpyruvylshikimate-3-phosphate (EPSP) to yield chorismate, which is the branch point compound that serves as the starting substrate for the three terminal pathways of aromatic amino acid biosynthesis. This reaction introduces a second double bond into the aromatic ring system. In Bacillus cereus (strain ZK / E33L), this protein is Chorismate synthase 2.